Consider the following 318-residue polypeptide: Zinc chaperone YjiA (318 aa).

Residue 11–19 (GFLGAGKTT) participates in GTP binding. Zn(2+) is bound by residues Glu37, Glu42, Cys66, Glu74, and His114. The CXCC motif signature appears at 64-67 (CICC). Asp161 lines the GTP pocket. Residues Glu167, His170, and His187 each coordinate Zn(2+). The region spanning 224-315 (ISSIVVELDY…EEEIRAAFAG (92 aa)) is the CobW C-terminal domain.

Belongs to the SIMIBI class G3E GTPase family. ZNG1 subfamily. Monomer in the apo form. Metal binding induces oligomerization. Forms homodimers and higher oligomers.

It carries out the reaction GTP + H2O = GDP + phosphate + H(+). With respect to regulation, GTPase activity is inhibited by metal binding. Activity is decreased in the presence of Co(II) or Ni(II), and is completely inhibited in the presence of Zn(II). Zinc chaperone that directly transfers zinc cofactor to target proteins, thereby activating them. Zinc is transferred from the CXCC motif in the GTPase domain to the zinc binding site in target proteins in a process requiring GTP hydrolysis. The polypeptide is Zinc chaperone YjiA (yjiA) (Escherichia coli (strain K12)).